A 202-amino-acid polypeptide reads, in one-letter code: D-alanyl-D-alanine dipeptidase (202 aa).

Zn(2+)-binding residues include His116 and Asp123. The active-site Proton donor/acceptor is the Glu181. His184 provides a ligand contact to Zn(2+).

It belongs to the peptidase M15D family. As to quaternary structure, homodimer. It depends on Zn(2+) as a cofactor. Fe(2+) serves as cofactor. Co(2+) is required as a cofactor. Requires Ni(2+) as cofactor.

The catalysed reaction is D-alanyl-D-alanine + H2O = 2 D-alanine. Inhibited by aminoalkyl phosphinate analogs. In terms of biological role, catalyzes hydrolysis of the D-alanyl-D-alanine dipeptide. This is D-alanyl-D-alanine dipeptidase (vanX) from Enterococcus faecium (Streptococcus faecium).